The following is a 505-amino-acid chain: Alpha-ketoglutarate-dependent dioxygenase FTO (505 aa).

Threonine 4 is modified (phosphothreonine). Residues threonine 32 to serine 327 are fe2OG dioxygenase domain. 2 residues coordinate substrate: arginine 96 and tyrosine 108. Asparagine 205 lines the 2-oxoglutarate pocket. The tract at residues proline 213–glycine 224 is loop L1; predicted to block binding of double-stranded DNA or RNA. Residue lysine 216 is modified to N6-acetyllysine. Residues histidine 231 and aspartate 233 each coordinate Fe cation. Histidine 231 to glutamate 234 is a binding site for substrate. Residue tyrosine 295 participates in 2-oxoglutarate binding. Histidine 307 contributes to the Fe cation binding site. Residues arginine 316 to serine 318, threonine 320, and arginine 322 contribute to the 2-oxoglutarate site.

This sequence belongs to the fto family. Monomer. May also exist as homodimer. It depends on Fe(2+) as a cofactor.

It is found in the nucleus. The protein resides in the nucleus speckle. It localises to the cytoplasm. It catalyses the reaction a 5'-end (N(7)-methyl 5'-triphosphoguanosine)-(N(6),2'-O-dimethyladenosine) in mRNA + 2-oxoglutarate + O2 = a 5'-end (N(7)-methyl 5'-triphosphoguanosine)-(2'-O-methyladenosine) in mRNA + formaldehyde + succinate + CO2. It carries out the reaction an N(6)-methyladenosine in mRNA + 2-oxoglutarate + O2 = an adenosine in mRNA + formaldehyde + succinate + CO2. The catalysed reaction is N(6)-methyladenosine in U6 snRNA + 2-oxoglutarate + O2 = adenosine in U6 snRNA + formaldehyde + succinate + CO2. The enzyme catalyses a 5'-end (N(7)-methyl 5'-triphosphoguanosine)-(N(6),2'-O-dimethyladenosine) in U6 snRNA + 2-oxoglutarate + O2 = a 5'-end (N(7)-methyl 5'-triphosphoguanosine)-(2'-O-methyladenosine) in U6 snRNA + formaldehyde + succinate + CO2. It catalyses the reaction an N(1)-methyladenosine in tRNA + 2-oxoglutarate + O2 = an adenosine in tRNA + formaldehyde + succinate + CO2. Its activity is regulated as follows. Activated by ascorbate. Inhibited by N-oxalylglycine, fumarate and succinate. Functionally, RNA demethylase that mediates oxidative demethylation of different RNA species, such as mRNAs, tRNAs and snRNAs, and acts as a regulator of fat mass, adipogenesis and energy homeostasis. Specifically demethylates N(6)-methyladenosine (m6A) RNA, the most prevalent internal modification of messenger RNA (mRNA) in higher eukaryotes. M6A demethylation by FTO affects mRNA expression and stability. Also able to demethylate m6A in U6 small nuclear RNA (snRNA). Mediates demethylation of N(6),2'-O-dimethyladenosine cap (m6A(m)), by demethylating the N(6)-methyladenosine at the second transcribed position of mRNAs and U6 snRNA. Demethylation of m6A(m) in the 5'-cap by FTO affects mRNA stability by promoting susceptibility to decapping. Also acts as a tRNA demethylase by removing N(1)-methyladenine from various tRNAs. Has no activity towards 1-methylguanine. Has no detectable activity towards double-stranded DNA. Also able to repair alkylated DNA and RNA by oxidative demethylation: demethylates single-stranded RNA containing 3-methyluracil, single-stranded DNA containing 3-methylthymine and has low demethylase activity towards single-stranded DNA containing 1-methyladenine or 3-methylcytosine. Ability to repair alkylated DNA and RNA is however unsure in vivo. Involved in the regulation of fat mass, adipogenesis and body weight, thereby contributing to the regulation of body size and body fat accumulation. Involved in the regulation of thermogenesis and the control of adipocyte differentiation into brown or white fat cells. Regulates activity of the dopaminergic midbrain circuitry via its ability to demethylate m6A in mRNAs. The protein is Alpha-ketoglutarate-dependent dioxygenase FTO of Pongo abelii (Sumatran orangutan).